A 381-amino-acid polypeptide reads, in one-letter code: Creatine kinase M-type (381 aa).

Residues 11-98 (KLNYSAAEEF…FDPVIEDRHG (88 aa)) form the Phosphagen kinase N-terminal domain. The Phosphagen kinase C-terminal domain occupies 125–367 (YVLSSRVRTG…KLMVEMEKRL (243 aa)). Residues 128-132 (SSRVR), H191, R236, R292, 320-325 (RGTGGV), and D335 each bind ATP.

Belongs to the ATP:guanido phosphotransferase family. In terms of assembly, dimer of identical or non-identical chains. With MM being the major form in skeletal muscle and myocardium, MB existing in myocardium, and BB existing in many tissues, especially brain.

The protein localises to the cytoplasm. The catalysed reaction is creatine + ATP = N-phosphocreatine + ADP + H(+). In terms of biological role, reversibly catalyzes the transfer of phosphate between ATP and various phosphogens (e.g. creatine phosphate). Creatine kinase isoenzymes play a central role in energy transduction in tissues with large, fluctuating energy demands, such as skeletal muscle, heart, brain and spermatozoa. This chain is Creatine kinase M-type, found in Tetronarce californica (Pacific electric ray).